We begin with the raw amino-acid sequence, 377 residues long: T-protein (377 aa).

Residues 1-92 (MSFMEALKDL…ESYANENQFG (92 aa)) enclose the Chorismate mutase domain. The 264-residue stretch at 101–364 (HKIVIVGGYG…DYSEQFLKES (264 aa)) folds into the Prephenate/arogenate dehydrogenase domain.

This sequence in the C-terminal section; belongs to the prephenate/arogenate dehydrogenase family.

It is found in the cytoplasm. The enzyme catalyses chorismate = prephenate. The catalysed reaction is prephenate + NAD(+) = 3-(4-hydroxyphenyl)pyruvate + CO2 + NADH. It functions in the pathway amino-acid biosynthesis; L-tyrosine biosynthesis; (4-hydroxyphenyl)pyruvate from prephenate (NAD(+) route): step 1/1. The protein operates within metabolic intermediate biosynthesis; prephenate biosynthesis; prephenate from chorismate: step 1/1. This chain is T-protein (tyrA), found in Haemophilus influenzae (strain ATCC 51907 / DSM 11121 / KW20 / Rd).